The following is a 341-amino-acid chain: Phenylalanine--tRNA ligase alpha subunit (341 aa).

E259 is a Mg(2+) binding site.

Belongs to the class-II aminoacyl-tRNA synthetase family. Phe-tRNA synthetase alpha subunit type 1 subfamily. Tetramer of two alpha and two beta subunits. Requires Mg(2+) as cofactor.

It localises to the cytoplasm. It catalyses the reaction tRNA(Phe) + L-phenylalanine + ATP = L-phenylalanyl-tRNA(Phe) + AMP + diphosphate + H(+). The sequence is that of Phenylalanine--tRNA ligase alpha subunit from Mycobacterium tuberculosis (strain ATCC 25177 / H37Ra).